Consider the following 561-residue polypeptide: Potassium-transporting ATPase potassium-binding subunit (561 aa).

12 consecutive transmembrane segments (helical) span residues 5–25 (LAAG…YVPV), 60–80 (YGYA…LYAL), 86–106 (VLPL…NTAV), 131–151 (GLAV…VALI), 177–197 (ILLP…VIQS), 247–267 (PTPV…VSLT), 281–301 (LTLL…TLAA), 324–344 (FGIP…TGAV), 376–396 (GLYG…LLVG), 415–435 (ALSV…TVIL), 488–508 (ALGL…LALA), and 537–557 (GTVV…GPIA).

It belongs to the KdpA family. In terms of assembly, the system is composed of three essential subunits: KdpA, KdpB and KdpC.

It localises to the cell membrane. In terms of biological role, part of the high-affinity ATP-driven potassium transport (or Kdp) system, which catalyzes the hydrolysis of ATP coupled with the electrogenic transport of potassium into the cytoplasm. This subunit binds the extracellular potassium ions and delivers the ions to the membrane domain of KdpB through an intramembrane tunnel. The chain is Potassium-transporting ATPase potassium-binding subunit from Rhodococcus opacus (strain B4).